Consider the following 460-residue polypeptide: Chromosomal replication initiator protein DnaA (460 aa).

Residues 1-78 are domain I, interacts with DnaA modulators; sequence MENFWQACSA…VPVEVQFVLD (78 aa). The tract at residues 78–123 is domain II; it reads DPRLVAARRPAAQASVVSDRADDVPSNVLEPIPSNATDHTPRRDQS. The domain III, AAA+ region stretch occupies residues 124–340; it reads RINTALTFDS…GALRKILAYS (217 aa). The ATP site is built by glycine 168, glycine 170, lysine 171, and threonine 172. The segment at 341–460 is domain IV, binds dsDNA; it reads RFHGKDITIE…LHVLEQTLKG (120 aa).

Belongs to the DnaA family. Oligomerizes as a right-handed, spiral filament on DNA at oriC.

It localises to the cytoplasm. In terms of biological role, plays an essential role in the initiation and regulation of chromosomal replication. ATP-DnaA binds to the origin of replication (oriC) to initiate formation of the DNA replication initiation complex once per cell cycle. Binds the DnaA box (a 9 base pair repeat at the origin) and separates the double-stranded (ds)DNA. Forms a right-handed helical filament on oriC DNA; dsDNA binds to the exterior of the filament while single-stranded (ss)DNA is stabiized in the filament's interior. The ATP-DnaA-oriC complex binds and stabilizes one strand of the AT-rich DNA unwinding element (DUE), permitting loading of DNA polymerase. After initiation quickly degrades to an ADP-DnaA complex that is not apt for DNA replication. Binds acidic phospholipids. The protein is Chromosomal replication initiator protein DnaA of Herminiimonas arsenicoxydans.